The sequence spans 668 residues: tRNA 5-methylaminomethyl-2-thiouridine biosynthesis bifunctional protein MnmC (668 aa).

The interval M1–E245 is tRNA (mnm(5)s(2)U34)-methyltransferase. Residues I270 to G668 are FAD-dependent cmnm(5)s(2)U34 oxidoreductase.

In the N-terminal section; belongs to the methyltransferase superfamily. tRNA (mnm(5)s(2)U34)-methyltransferase family. This sequence in the C-terminal section; belongs to the DAO family. FAD is required as a cofactor.

Its subcellular location is the cytoplasm. It catalyses the reaction 5-aminomethyl-2-thiouridine(34) in tRNA + S-adenosyl-L-methionine = 5-methylaminomethyl-2-thiouridine(34) in tRNA + S-adenosyl-L-homocysteine + H(+). Its function is as follows. Catalyzes the last two steps in the biosynthesis of 5-methylaminomethyl-2-thiouridine (mnm(5)s(2)U) at the wobble position (U34) in tRNA. Catalyzes the FAD-dependent demodification of cmnm(5)s(2)U34 to nm(5)s(2)U34, followed by the transfer of a methyl group from S-adenosyl-L-methionine to nm(5)s(2)U34, to form mnm(5)s(2)U34. The chain is tRNA 5-methylaminomethyl-2-thiouridine biosynthesis bifunctional protein MnmC from Escherichia coli O6:H1 (strain CFT073 / ATCC 700928 / UPEC).